The chain runs to 186 residues: UPF0301 protein APL_0232 (186 aa).

The protein belongs to the UPF0301 (AlgH) family.

The polypeptide is UPF0301 protein APL_0232 (Actinobacillus pleuropneumoniae serotype 5b (strain L20)).